The primary structure comprises 670 residues: MESIIQQINQLRTSLRHHEHQYHVLDAPEIPDAEYDRMMQQLRDLEAQHPELVTNDSPTQRVGAAPLDAFEQVEHEVPMLSLDNVFDEESYLAFDKRVHDRLKTAEPLTFCCELKLDGLAVSLLYENGELVRAATRGDGTTGENITANVRTIRAIPLRLHGDNVPRRVEVRGEVFMPQAGFEQLNEEARRKGGKVFANPRNAAAGSLRQLDPRITAKRPLTFFCYGVGLLDGGELPRSHIQCLMQFKAWGLPVSERVKLCTGSDQVIAFYRQIEQDRAGLGFDIDGVVIKVDDLVLQEQLGFVARAPRWATAFKFPAQEQITQVREVEFQVGRTGAITPVARLEPVQVAGVIVSNATLHNADEIERLGLRIGDTVIVRRAGDVIPQVVGVVMEQRPDDTKEITFPSQCPVCGSDIERVEGEAVARCTGGLFCAAQRKEALKHFVSRRALDVDGMGDKIIEQLVEKQYVENPADLFQLTAGKLTGLDRMGPKSAQNLIAALEKAKQTTFARFLYALGIREVGEATAANLAAHFRTLDNLRAADIETLKSVPDVGEVVAKHVMNFLSEEHNQKVIEELEKVVSWPEPQQIVVEEIDSPFAGKTVVLTGSLTILSRDEAKDRLTALGAKVSGSVSKKTHLVIAGEAAGSKLAKAQELGIKVIDEAEMIRLLGE.

NAD(+) contacts are provided by residues 32–36, 81–82, and Glu-113; these read DAEYD and SL. Lys-115 serves as the catalytic N6-AMP-lysine intermediate. Residues Arg-136, Glu-173, Lys-290, and Lys-314 each contribute to the NAD(+) site. Residues Cys-408, Cys-411, Cys-426, and Cys-432 each coordinate Zn(2+). The BRCT domain occupies 592–670; sequence EIDSPFAGKT…EAEMIRLLGE (79 aa).

It belongs to the NAD-dependent DNA ligase family. LigA subfamily. Mg(2+) serves as cofactor. Requires Mn(2+) as cofactor.

It catalyses the reaction NAD(+) + (deoxyribonucleotide)n-3'-hydroxyl + 5'-phospho-(deoxyribonucleotide)m = (deoxyribonucleotide)n+m + AMP + beta-nicotinamide D-nucleotide.. In terms of biological role, DNA ligase that catalyzes the formation of phosphodiester linkages between 5'-phosphoryl and 3'-hydroxyl groups in double-stranded DNA using NAD as a coenzyme and as the energy source for the reaction. It is essential for DNA replication and repair of damaged DNA. This is DNA ligase from Yersinia pseudotuberculosis serotype O:1b (strain IP 31758).